Here is a 394-residue protein sequence, read N- to C-terminus: MVSFTQLQLAFLGLSALGAAVPVTGTSEKKTFSLNQVKVAGTKTKNPAEHYANALRKYGAEVPSHVLAAAAATGSVTTSPTEFDSEYLTPIDVGGTTMNLDIDTGSSDLWVFSKELPSSETSGHAVYSPSSQSQLLNGYSWSISYGDGSSASGNVYLDYVTVGGVTASSQAVEAAETISSEFQQDPSDGLMGLAFSSINTVQPESQSTFFDNVQSNLASPVFCADLKYEAPGVYDFGFIDSSKHTGSVTYTPVDNSQGFWGFTASGYAVGSGSTVSTSISGIADTGTTLLLLPSSIVKKYYAQVKGSSNSATYGGYVFPCSATLPKFTVVINGYKAVIAAQYLNYSPVETGSSTCFGGIQSDTGIGFSIFGDIFLKSQYVVFDASGPRLGFAPQ.

The signal sequence occupies residues 1 to 20 (MVSFTQLQLAFLGLSALGAA). Residues 21–70 (VPVTGTSEKKTFSLNQVKVAGTKTKNPAEHYANALRKYGAEVPSHVLAAA) constitute a propeptide, activation peptide. Residues 87–392 (YLTPIDVGGT…DASGPRLGFA (306 aa)) form the Peptidase A1 domain. Residues D103 and D284 contribute to the active site. A disulfide bond links C320 and C355.

This sequence belongs to the peptidase A1 family. Monomer.

The protein localises to the secreted. The catalysed reaction is Hydrolysis of proteins with broad specificity similar to that of pepsin A, preferring hydrophobic residues at P1 and P1', but also cleaving 20-Gly-|-Glu-21 in the B chain of insulin. Clots milk, and activates trypsinogen.. In terms of biological role, secreted aspartic endopeptidase that allows assimilation of proteinaceous substrates. The scissile peptide bond is attacked by a nucleophilic water molecule activated by two aspartic residues in the active site. Shows a broad primary substrate specificity. Favors hydrophobic residues at the P1 and P1' positions, but can also activate trypsinogen and hydrolyze the B chain of insulin between positions 'Gly-20' and 'Glu-21'. This chain is Penicillopepsin-3, found in Penicillium janthinellum (Penicillium vitale).